The primary structure comprises 311 residues: HPr kinase/phosphorylase (311 aa).

Residues histidine 136 and lysine 157 contribute to the active site. 151–158 (GDSGIGKS) contacts ATP. Serine 158 is a Mg(2+) binding site. Aspartate 175 (proton acceptor; for phosphorylation activity. Proton donor; for dephosphorylation activity) is an active-site residue. An important for the catalytic mechanism of both phosphorylation and dephosphorylation region spans residues 199-208 (LEIRGLGIIN). Glutamate 200 contacts Mg(2+). Residue arginine 241 is part of the active site. The important for the catalytic mechanism of dephosphorylation stretch occupies residues 262 to 267 (PVRPGR).

The protein belongs to the HPrK/P family. In terms of assembly, homohexamer. Mg(2+) serves as cofactor.

It carries out the reaction [HPr protein]-L-serine + ATP = [HPr protein]-O-phospho-L-serine + ADP + H(+). The catalysed reaction is [HPr protein]-O-phospho-L-serine + phosphate + H(+) = [HPr protein]-L-serine + diphosphate. In terms of biological role, catalyzes the ATP- as well as the pyrophosphate-dependent phosphorylation of a specific serine residue in HPr, a phosphocarrier protein of the phosphoenolpyruvate-dependent sugar phosphotransferase system (PTS). HprK/P also catalyzes the pyrophosphate-producing, inorganic phosphate-dependent dephosphorylation (phosphorolysis) of seryl-phosphorylated HPr (P-Ser-HPr). The two antagonistic activities of HprK/P are regulated by several intracellular metabolites, which change their concentration in response to the absence or presence of rapidly metabolisable carbon sources (glucose, fructose, etc.) in the growth medium. Therefore, by controlling the phosphorylation state of HPr, HPrK/P is a sensor enzyme that plays a major role in the regulation of carbon metabolism and sugar transport: it mediates carbon catabolite repression (CCR), and regulates PTS-catalyzed carbohydrate uptake and inducer exclusion. This is HPr kinase/phosphorylase from Staphylococcus haemolyticus (strain JCSC1435).